The following is a 322-amino-acid chain: AA9 family lytic polysaccharide monooxygenase B (322 aa).

The first 17 residues, 1–17, serve as a signal peptide directing secretion; it reads MFSKSIIAASLLTAVTA. His-18 provides a ligand contact to Cu(2+). Asn-53 and Asn-68 each carry an N-linked (GlcNAc...) asparagine glycan. An intrachain disulfide couples Cys-56 to Cys-173. His-87 contributes to the Cu(2+) binding site. N-linked (GlcNAc...) asparagine glycans are attached at residues Asn-121 and Asn-133. Residues His-159 and Gln-168 each coordinate O2. Cu(2+) is bound at residue Tyr-170. An N-linked (GlcNAc...) asparagine glycan is attached at Asn-197.

It belongs to the polysaccharide monooxygenase AA9 family. Cu(2+) is required as a cofactor.

It is found in the secreted. The catalysed reaction is [(1-&gt;4)-beta-D-glucosyl]n+m + reduced acceptor + O2 = 4-dehydro-beta-D-glucosyl-[(1-&gt;4)-beta-D-glucosyl]n-1 + [(1-&gt;4)-beta-D-glucosyl]m + acceptor + H2O.. Functionally, lytic polysaccharide monooxygenase (LPMO) that depolymerizes crystalline and amorphous polysaccharides via the oxidation of scissile alpha- or beta-(1-4)-glycosidic bonds, yielding C1 and C4 oxidation products. Catalysis by LPMOs requires the reduction of the active-site copper from Cu(II) to Cu(I) by a reducing agent and H(2)O(2) or O(2) as a cosubstrate. This Botryotinia fuckeliana (strain B05.10) (Noble rot fungus) protein is AA9 family lytic polysaccharide monooxygenase B.